Reading from the N-terminus, the 197-residue chain is Ribonuclease HII (197 aa).

The RNase H type-2 domain maps to 14–197; the sequence is EKIVGIDEAG…RSFNLGVNDD (184 aa). Residues D20, E21, and D112 each contribute to the a divalent metal cation site.

This sequence belongs to the RNase HII family. It depends on Mn(2+) as a cofactor. Mg(2+) is required as a cofactor.

Its subcellular location is the cytoplasm. It carries out the reaction Endonucleolytic cleavage to 5'-phosphomonoester.. Endonuclease that specifically degrades the RNA of RNA-DNA hybrids. This chain is Ribonuclease HII, found in Sulfurihydrogenibium sp. (strain YO3AOP1).